A 310-amino-acid chain; its full sequence is p-hydroxybenzoic acid efflux pump subunit AaeA (310 aa).

The helical transmembrane segment at 12 to 32 (AITVVLVILAFIAIFNAWVYY) threads the bilayer.

The protein belongs to the membrane fusion protein (MFP) (TC 8.A.1) family.

It localises to the cell inner membrane. Forms an efflux pump with AaeB. The chain is p-hydroxybenzoic acid efflux pump subunit AaeA from Escherichia coli O8 (strain IAI1).